A 335-amino-acid chain; its full sequence is Nucleotide-binding protein CYA_0911 (335 aa).

20 to 27 (GLTGSGKT) lines the ATP pocket. A disordered region spans residues 306-335 (ARFGPPPPAAGVEQQQVRIPLAGVPAPPHD).

This sequence belongs to the RapZ-like family.

Its function is as follows. Displays ATPase and GTPase activities. The protein is Nucleotide-binding protein CYA_0911 of Synechococcus sp. (strain JA-3-3Ab) (Cyanobacteria bacterium Yellowstone A-Prime).